The sequence spans 461 residues: ATP synthase subunit beta (461 aa).

ATP is bound at residue 151–158; it reads GGAGVGKT.

The protein belongs to the ATPase alpha/beta chains family. In terms of assembly, F-type ATPases have 2 components, CF(1) - the catalytic core - and CF(0) - the membrane proton channel. CF(1) has five subunits: alpha(3), beta(3), gamma(1), delta(1), epsilon(1). CF(0) has three main subunits: a(1), b(2) and c(9-12). The alpha and beta chains form an alternating ring which encloses part of the gamma chain. CF(1) is attached to CF(0) by a central stalk formed by the gamma and epsilon chains, while a peripheral stalk is formed by the delta and b chains.

It localises to the cell inner membrane. It carries out the reaction ATP + H2O + 4 H(+)(in) = ADP + phosphate + 5 H(+)(out). Functionally, produces ATP from ADP in the presence of a proton gradient across the membrane. The catalytic sites are hosted primarily by the beta subunits. This Colwellia psychrerythraea (strain 34H / ATCC BAA-681) (Vibrio psychroerythus) protein is ATP synthase subunit beta.